The primary structure comprises 410 residues: Serine hydroxymethyltransferase (410 aa).

(6S)-5,6,7,8-tetrahydrofolate is bound by residues L119 and 123 to 125; that span reads GHL. K228 carries the post-translational modification N6-(pyridoxal phosphate)lysine. 351-353 serves as a coordination point for (6S)-5,6,7,8-tetrahydrofolate; the sequence is SPF.

It belongs to the SHMT family. In terms of assembly, homodimer. Pyridoxal 5'-phosphate serves as cofactor.

The protein localises to the cytoplasm. It catalyses the reaction (6R)-5,10-methylene-5,6,7,8-tetrahydrofolate + glycine + H2O = (6S)-5,6,7,8-tetrahydrofolate + L-serine. It participates in one-carbon metabolism; tetrahydrofolate interconversion. Its pathway is amino-acid biosynthesis; glycine biosynthesis; glycine from L-serine: step 1/1. In terms of biological role, catalyzes the reversible interconversion of serine and glycine with tetrahydrofolate (THF) serving as the one-carbon carrier. This reaction serves as the major source of one-carbon groups required for the biosynthesis of purines, thymidylate, methionine, and other important biomolecules. Also exhibits THF-independent aldolase activity toward beta-hydroxyamino acids, producing glycine and aldehydes, via a retro-aldol mechanism. In Clostridium perfringens (strain 13 / Type A), this protein is Serine hydroxymethyltransferase.